A 271-amino-acid polypeptide reads, in one-letter code: RELT-like protein 1 (271 aa).

Positions 1–23 (MAPRGLPGSAVLAAAVFVGGAVS) are cleaved as a signal peptide. The Extracellular segment spans residues 24–57 (SPLVRSDHSGSHPLPSKTETTPSPTNNNGNGHPE). The interval 27-52 (VRSDHSGSHPLPSKTETTPSPTNNNG) is disordered. The span at 36–52 (PLPSKTETTPSPTNNNG) shows a compositional bias: low complexity. Residues 58–78 (YIAYALVPVFFVMGLFGVLIC) traverse the membrane as a helical segment. The Cytoplasmic portion of the chain corresponds to 79–271 (HLLKKKGYRC…PVKRQQSDSE (193 aa)). Phosphoserine occurs at positions 109 and 114. Disordered regions lie at residues 144–168 (CDPE…LSPG) and 231–271 (TKVE…SDSE). The segment covering 155 to 165 (PGSPPVSPGPL) has biased composition (pro residues). Positions 231–244 (TKVEPKSNQKERRS) are enriched in basic and acidic residues. Phosphoserine occurs at positions 244 and 247.

It belongs to the RELT family. As to quaternary structure, interacts with RELT, RELL2, OXSR1 and PLSCR1.

Its subcellular location is the cell membrane. In terms of biological role, induces activation of MAPK14/p38 cascade, when overexpressed. Induces apoptosis, when overexpressed. The protein is RELT-like protein 1 (RELL1) of Bos taurus (Bovine).